The primary structure comprises 337 residues: Follistatin (337 aa).

Positions 1–22 (PGGVCLLLLLLCQFMEDRSAQA) are cleaved as a signal peptide. One can recognise a TB domain in the interval 23 to 96 (GNCWLRQAKN…TCENVDCGPG (74 aa)). 18 disulfide bridges follow: Cys-25-Cys-48, Cys-35-Cys-81, Cys-49-Cys-84, Cys-88-Cys-99, Cys-93-Cys-109, Cys-111-Cys-143, Cys-115-Cys-136, Cys-125-Cys-157, Cys-161-Cys-172, Cys-166-Cys-182, Cys-185-Cys-218, Cys-189-Cys-211, Cys-200-Cys-232, Cys-238-Cys-249, Cys-243-Cys-260, Cys-263-Cys-295, Cys-267-Cys-288, and Cys-277-Cys-309. The Follistatin-like 1 domain maps to 87–110 (TCENVDCGPGKKCRMNKKNKPRCV). Positions 105-159 (NKPRCVCAPDCSNITWKGPVCGLDGKTYRNECALLKARCKEQPELEVQYQGKCKK) constitute a Kazal-like 1 domain. The N-linked (GlcNAc...) asparagine glycan is linked to Asn-117. A Follistatin-like 2 domain is found at 160–183 (TCRDVFCPGSSTCVVDQTNNAYCV). A Kazal-like 2 domain is found at 179–234 (NAYCVTCNRICPEPTSSEQYLCGNDGVTYPSACHLRKATCLLGRSIGLAYEGKCIK). Residues 237-261 (SCEDIQCTGGKKCLWDFKVGRGRCS) enclose the Follistatin-like 3 domain. Residues 254–311 (KVGRGRCSLCGELCPESKSEEPVCASDNATYASECAMKEAACSSGVLLEVKHSGSCNS) enclose the Kazal-like 3 domain. A glycan (N-linked (GlcNAc...) asparagine) is linked at Asn-281. Residues 309 to 337 (CNSISEDTEDEEEDEDQDYSFPISSILEW) are disordered. Residues 314–326 (EDTEDEEEDEDQD) are compositionally biased toward acidic residues.

In terms of assembly, monomer.

The protein localises to the secreted. In terms of biological role, binds directly to activin and functions as an activin antagonist. Specific inhibitor of the biosynthesis and secretion of pituitary follicle stimulating hormone (FSH). This Ovis aries (Sheep) protein is Follistatin.